Here is a 563-residue protein sequence, read N- to C-terminus: Beta-catenin-like protein 1 (563 aa).

M1 is modified (N-acetylmethionine). Residues 1–49 form a disordered region; the sequence is MDVGELLSYQPNRGTKRPRDDEEEELKMRRRQAGTRERGRYREEEMTVV. The short motif at 16 to 33 is the Nuclear localization signal element; it reads KRPRDDEEEELKMRRRQA. Residues 34-45 are compositionally biased toward basic and acidic residues; that stretch reads GTRERGRYREEE. HEAT repeat units lie at residues 79–129 and 134–176; these read ESSV…VVAT and YHLL…TLHE. Position 91 is an N6-acetyllysine (K91). Residues 130–140 carry the Nuclear export signal (NES) motif; sequence MPDLYHLLVEL. ARM repeat units follow at residues 178–228, 229–273, 274–323, 325–363, and 364–417; these read EEGA…MAEF, RPEM…LQDN, DENR…CLML, SNRE…AMIG, and PEGT…LLRN. S389 bears the Phosphoserine mark. A coiled-coil region spans residues 476–540; the sequence is DIEDEFYLRR…HIIKEYAENI (65 aa). A Phosphoserine modification is found at S545.

Component of the PRP19-CDC5L splicing complex composed of a core complex comprising a homotetramer of PRPF19, CDC5L, PLRG1 and BCAS2, and at least three less stably associated proteins CTNNBL1, CWC15 and HSPA8. Interacts directly with CWC15 and CDC5L in the complex. Interacts with AICDA; the interaction is important for the antibody diversification activity of AICDA. Interacts with PRPF31 (via its NLS). Interacts (via its N-terminal NLS) with KPNA1 and KPNA2.

Its subcellular location is the nucleus. Functionally, component of the PRP19-CDC5L complex that forms an integral part of the spliceosome and is required for activating pre-mRNA splicing. Participates in AID/AICDA-mediated somatic hypermutation (SHM) and class-switch recombination (CSR), 2 processes resulting in the production of high-affinity, mutated isotype-switched antibodies. The sequence is that of Beta-catenin-like protein 1 (CTNNBL1) from Bos taurus (Bovine).